The sequence spans 147 residues: Hemoglobin subunit gamma (147 aa).

Residues 3-147 (HFTAEEKAII…VAIALGHKYH (145 aa)) form the Globin domain. Heme b is bound by residues H64 and H93.

This sequence belongs to the globin family. Heterotetramer of two alpha chains and two gamma chains in fetal hemoglobin (Hb F). In terms of tissue distribution, red blood cells.

Functionally, gamma chains make up the fetal hemoglobin F, in combination with alpha chains. The chain is Hemoglobin subunit gamma (HBG) from Cephalopachus bancanus (Western tarsier).